A 100-amino-acid chain; its full sequence is Urease subunit gamma (100 aa).

The protein belongs to the urease gamma subunit family. As to quaternary structure, heterotrimer of UreA (gamma), UreB (beta) and UreC (alpha) subunits. Three heterotrimers associate to form the active enzyme.

The protein localises to the cytoplasm. It catalyses the reaction urea + 2 H2O + H(+) = hydrogencarbonate + 2 NH4(+). It functions in the pathway nitrogen metabolism; urea degradation; CO(2) and NH(3) from urea (urease route): step 1/1. This chain is Urease subunit gamma, found in Synechococcus sp. (strain WH7805).